Here is a 109-residue protein sequence, read N- to C-terminus: Cell division protein ZapA (109 aa).

Positions 21 to 99 (PEQRDALNQA…IEQALLEQGR (79 aa)) form a coiled coil.

This sequence belongs to the ZapA family. Type 1 subfamily. As to quaternary structure, homodimer. Interacts with FtsZ.

Its subcellular location is the cytoplasm. In terms of biological role, activator of cell division through the inhibition of FtsZ GTPase activity, therefore promoting FtsZ assembly into bundles of protofilaments necessary for the formation of the division Z ring. It is recruited early at mid-cell but it is not essential for cell division. This chain is Cell division protein ZapA, found in Cronobacter sakazakii (strain ATCC BAA-894) (Enterobacter sakazakii).